The chain runs to 517 residues: Putative alpha-L-fucosidase 1 (517 aa).

The N-terminal stretch at 1–20 (MATILLLLLGLLVGLPLLRA) is a signal peptide. 7 N-linked (GlcNAc...) asparagine glycosylation sites follow: asparagine 119, asparagine 249, asparagine 296, asparagine 321, asparagine 352, asparagine 496, and asparagine 511.

This sequence belongs to the glycosyl hydrolase 29 family.

Its subcellular location is the secreted. It localises to the extracellular space. The protein resides in the apoplast. The catalysed reaction is an alpha-L-fucoside + H2O = L-fucose + an alcohol. In terms of biological role, alpha-L-fucosidase is responsible for hydrolyzing the alpha-1,6-linked fucose joined to the reducing-end N-acetylglucosamine of the carbohydrate moieties of glycoproteins. Active only against 2'-fucosyl-lactitol when heterologously expressed. The protein is Putative alpha-L-fucosidase 1 of Oryza sativa subsp. japonica (Rice).